The chain runs to 279 residues: Alcohol dehydrogenase-related 31 kDa protein (279 aa).

11–34 contributes to the NAD(+) binding site; sequence YVADCGGIALETSKVLMTKNIAKL. Ser-139 contributes to the substrate binding site. The active-site Proton acceptor is Tyr-152.

It belongs to the short-chain dehydrogenases/reductases (SDR) family.

The sequence is that of Alcohol dehydrogenase-related 31 kDa protein (Adhr) from Drosophila madeirensis (Fruit fly).